The chain runs to 661 residues: UvrABC system protein B (661 aa).

Residues 25–182 (KGLNNKKRSQ…NDLVNLQYER (158 aa)) enclose the Helicase ATP-binding domain. 38–45 (GITGSGKT) is an ATP binding site. A Beta-hairpin motif is present at residues 91-114 (YYDYYQPEAYIPKTDVFIEKDSSI). The Helicase C-terminal domain occupies 430–592 (QVEDLVGEIQ…IIPKTINRTI (163 aa)). Residues 621–656 (KAHIDKLRKEMLKAASNLEFEQAAKLRDQLKTLEEA) enclose the UVR domain.

Belongs to the UvrB family. As to quaternary structure, forms a heterotetramer with UvrA during the search for lesions. Interacts with UvrC in an incision complex.

The protein resides in the cytoplasm. Its function is as follows. The UvrABC repair system catalyzes the recognition and processing of DNA lesions. A damage recognition complex composed of 2 UvrA and 2 UvrB subunits scans DNA for abnormalities. Upon binding of the UvrA(2)B(2) complex to a putative damaged site, the DNA wraps around one UvrB monomer. DNA wrap is dependent on ATP binding by UvrB and probably causes local melting of the DNA helix, facilitating insertion of UvrB beta-hairpin between the DNA strands. Then UvrB probes one DNA strand for the presence of a lesion. If a lesion is found the UvrA subunits dissociate and the UvrB-DNA preincision complex is formed. This complex is subsequently bound by UvrC and the second UvrB is released. If no lesion is found, the DNA wraps around the other UvrB subunit that will check the other stand for damage. The protein is UvrABC system protein B of Rickettsia bellii (strain RML369-C).